A 65-amino-acid polypeptide reads, in one-letter code: Large ribosomal subunit protein bL35 (65 aa).

The tract at residues methionine 1–isoleucine 22 is disordered.

It belongs to the bacterial ribosomal protein bL35 family.

The polypeptide is Large ribosomal subunit protein bL35 (Flavobacterium johnsoniae (strain ATCC 17061 / DSM 2064 / JCM 8514 / BCRC 14874 / CCUG 350202 / NBRC 14942 / NCIMB 11054 / UW101) (Cytophaga johnsonae)).